Consider the following 366-residue polypeptide: Anhydro-N-acetylmuramic acid kinase (366 aa).

Residue 12–19 (GTSMDGAD) coordinates ATP.

This sequence belongs to the anhydro-N-acetylmuramic acid kinase family.

It catalyses the reaction 1,6-anhydro-N-acetyl-beta-muramate + ATP + H2O = N-acetyl-D-muramate 6-phosphate + ADP + H(+). It functions in the pathway amino-sugar metabolism; 1,6-anhydro-N-acetylmuramate degradation. The protein operates within cell wall biogenesis; peptidoglycan recycling. Catalyzes the specific phosphorylation of 1,6-anhydro-N-acetylmuramic acid (anhMurNAc) with the simultaneous cleavage of the 1,6-anhydro ring, generating MurNAc-6-P. Is required for the utilization of anhMurNAc either imported from the medium or derived from its own cell wall murein, and thus plays a role in cell wall recycling. This is Anhydro-N-acetylmuramic acid kinase from Neisseria meningitidis serogroup C (strain 053442).